We begin with the raw amino-acid sequence, 1127 residues long: Nck-associated protein 1-like (1127 aa).

A disordered region spans residues 638–670; that stretch reads KAKNKKTRKQRQTPRKGEPERDKPGAESHRKNR. Basic residues predominate over residues 639 to 651; the sequence is AKNKKTRKQRQTP. Residues 652–666 show a composition bias toward basic and acidic residues; sequence RKGEPERDKPGAESH. A helical membrane pass occupies residues 996 to 1016; that stretch reads VACLLLIFLAVSLPLLATDPS.

The protein belongs to the HEM-1/HEM-2 family. In hematopoietic cells, component of the WAVE2 complex composed of ABI1, CYFIP1/SRA1, NCKAP1L/HEM1 and WASF2/WAVE2. Interacts with ARHGAP4, PIK3C3/VPS34 and PPP1R12A/MYPT1. Interacts with mammalian target of rapamycin complex 2 (mTORC2) components, including MTOR and RICTOR. In terms of tissue distribution, expressed only in cells of hematopoietic origin. Expressed in neutrophils (at protein level). Expressed in T-cells (at protein level).

It localises to the cell membrane. The protein localises to the cytoplasm. Its function is as follows. Essential hematopoietic-specific regulator of the actin cytoskeleton. Controls lymphocyte development, activation, proliferation and homeostasis, erythrocyte membrane stability, as well as phagocytosis and migration by neutrophils and macrophages. Component of the WAVE2 complex which signals downstream of RAC to stimulate F-actin polymerization. Required for stabilization and/or translation of the WAVE2 complex proteins in hematopoietic cells. Within the WAVE2 complex, enables the cortical actin network to restrain excessive degranulation and granule release by T-cells. Required for efficient T-lymphocyte and neutrophil migration. Exhibits complex cycles of activation and inhibition to generate waves of propagating the assembly with actin. Also involved in mechanisms WAVE-independent to regulate myosin and actin polymerization during neutrophil chemotaxis. In T-cells, required for proper mechanistic target of rapamycin complex 2 (mTORC2)-dependent AKT phosphorylation, cell proliferation and cytokine secretion, including that of IL2 and TNF. In Homo sapiens (Human), this protein is Nck-associated protein 1-like.